The following is a 133-amino-acid chain: ATP synthase epsilon chain, chloroplastic (133 aa).

It belongs to the ATPase epsilon chain family. In terms of assembly, F-type ATPases have 2 components, CF(1) - the catalytic core - and CF(0) - the membrane proton channel. CF(1) has five subunits: alpha(3), beta(3), gamma(1), delta(1), epsilon(1). CF(0) has three main subunits: a, b and c.

The protein resides in the plastid. Its subcellular location is the chloroplast thylakoid membrane. In terms of biological role, produces ATP from ADP in the presence of a proton gradient across the membrane. This chain is ATP synthase epsilon chain, chloroplastic, found in Morus indica (Mulberry).